The chain runs to 350 residues: Protein XRP2 (350 aa).

Residues 1-10 (MGCFFSKRRK) are compositionally biased toward basic residues. The interval 1–31 (MGCFFSKRRKADKESRPENEEERPKQYSWDQ) is disordered. Residue Gly2 is the site of N-myristoyl glycine attachment. Cys3 carries the S-palmitoyl cysteine lipid modification. The segment covering 11-31 (ADKESRPENEEERPKQYSWDQ) has biased composition (basic and acidic residues). The C-CAP/cofactor C-like domain occupies 24–179 (PKQYSWDQRE…TWSNIHDFTP (156 aa)). GTP is bound by residues 98-99 (GS) and 115-118 (QQFR).

This sequence belongs to the TBCC family. As to quaternary structure, found in a complex with ARL3, RP2 and UNC119 (or UNC119B); RP2 induces hydrolysis of GTP ARL3 in the complex, leading to the release of UNC119 (or UNC119B). Interacts with ARL3; interaction is direct and stimulated with the activated GTP-bound form of ARL3. Post-translationally, myristoylated on Gly-2; which may be required for membrane targeting. Palmitoylated on Cys-3; which may be required for plasma membrane targeting. Mutation of Cys-3 targets the protein to internal membranes. Ubiquitous. Expressed in the rod and cone photoreceptors, extending from the tips of the outer segment (OS) through the inner segment (IS) and outer nuclear layer (ONL) and into the synaptic terminals of the outer plexiform layer (ONL). Also detected in the bipolar, horizontal and amacrine cells in the inner nuclear layer (INL), extending to the inner plexiform layer (IPL) and though the ganglion cell layer (GCL) and into the nerve fiber layer (NFL) (at protein level).

The protein localises to the cell membrane. It is found in the cell projection. It localises to the cilium. Its function is as follows. Acts as a GTPase-activating protein (GAP) involved in trafficking between the Golgi and the ciliary membrane. Involved in localization of proteins, such as NPHP3, to the cilium membrane by inducing hydrolysis of GTP ARL3, leading to the release of UNC119 (or UNC119B). Acts as a GTPase-activating protein (GAP) for tubulin in concert with tubulin-specific chaperone C, but does not enhance tubulin heterodimerization. Acts as a guanine nucleotide dissociation inhibitor towards ADP-ribosylation factor-like proteins. In Homo sapiens (Human), this protein is Protein XRP2 (RP2).